The sequence spans 384 residues: Substance-K receptor (384 aa).

Residues 1–32 (MGAHAIVTDANISSSLENNTTGITAFSMPGWQ) lie on the Extracellular side of the membrane. N-linked (GlcNAc...) asparagine glycans are attached at residues asparagine 11, asparagine 18, and asparagine 19. Residues 33 to 56 (LALWATAYLVLVLVAVTGNATVIW) form a helical membrane-spanning segment. The Cytoplasmic portion of the chain corresponds to 57–69 (IILAHQRMRTVTN). A helical membrane pass occupies residues 70-90 (YFIVNLALADLCMAAFNAAFN). Over 91 to 107 (FVYASHNIWYFGRAFCH) the chain is Extracellular. Cysteines 106 and 181 form a disulfide. The helical transmembrane segment at 108 to 129 (FQNLFPITAMFVSIYSMTAIAA) threads the bilayer. Residues 130 to 149 (DRYVAIVHPFQPRLSAPGTR) lie on the Cytoplasmic side of the membrane. A helical membrane pass occupies residues 150–170 (AVIAGIWLLALALAFPQCFYS). Topologically, residues 171 to 196 (TITMDQGATKCVVVWPEDNGSKMLLL) are extracellular. The chain crosses the membrane as a helical span at residues 197-218 (YHLVVIALIYVLPLLVMLLAYS). The Cytoplasmic portion of the chain corresponds to 219–251 (VIGLTLWRREVPRHQVHGASLRHLRAKKKFVKT). A helical membrane pass occupies residues 252-272 (MVLVVVTFAICWLPYHFYFIL). Residues 273–290 (GSFQEDIYYHKFIQQVYL) lie on the Extracellular side of the membrane. The helical transmembrane segment at 291–310 (ALFWLAMSSTMYNPIIYCCL) threads the bilayer. Over 311–384 (NHRFRSGFRL…GPQDGLPDEP (74 aa)) the chain is Cytoplasmic. Cysteine 324 carries S-palmitoyl cysteine lipidation.

Belongs to the G-protein coupled receptor 1 family.

The protein localises to the cell membrane. Its function is as follows. This is a receptor for the tachykinin neuropeptide substance K (neurokinin A). It is associated with G proteins that activate a phosphatidylinositol-calcium second messenger system. In Canis lupus familiaris (Dog), this protein is Substance-K receptor (TACR2).